A 918-amino-acid chain; its full sequence is Cell surface glycoprotein 1 (918 aa).

Positions 1–34 (MTDTNEKIRSLFLTALMVFSVFAGTIAFSGGAAA) are cleaved as a signal peptide. 7 N-linked (GlcNAc...) asparagine glycosylation sites follow: Asn-37, Asn-56, Asn-110, Asn-219, Asn-250, Asn-261, and Asn-291. N-linked (GalNAc...) asparagine glycosylation is present at Asn-306. Residues Asn-318, Asn-343, Asn-392, Asn-434, Asn-487, Asn-541, Asn-555, Asn-572, Asn-585, Asn-614, Asn-715, Asn-776, Asn-836, and Asn-845 are each glycosylated (N-linked (GlcNAc...) asparagine). The interval 815-894 (HQDTNGNEAY…DESETTAAEG (80 aa)) is disordered. Over residues 833-846 (YTQNGSAVTDSANV) the composition is skewed to polar residues. The segment covering 849-875 (VEEEQTEAPDTETETEAPDTETEEETD) has biased composition (acidic residues). Residues 894–914 (GPGFTAAIALIALVAAALLAV) traverse the membrane as a helical segment. Residues 895–897 (PGF) carry the PGF sorting signal motif.

This sequence belongs to the halobacterial S-layer protein family. Post-translationally, N-glycosylated on Asn-306; this N-linked glycan is a branched trisaccharide containing 2-amino-6-sulfo-2,6-dideoxy-glucose (sulfoquinovosamine). Cleaved by the archaeosortase ArtA at the C-terminus, with removal of a short hydrophobic segment. In terms of processing, lipidation.

The protein resides in the secreted. It localises to the cell wall. It is found in the S-layer. The protein localises to the cell membrane. Functionally, S-layer protein. The S-layer is a paracrystalline mono-layered assembly of proteins which coat the surface of the cell. In H.hispanica, the S-layer contains two different glycoproteins, Slg1 and Slg2, which share highly similar amino acid sequences. The protein is Cell surface glycoprotein 1 of Haloarcula hispanica (strain ATCC 33960 / DSM 4426 / JCM 8911 / NBRC 102182 / NCIMB 2187 / VKM B-1755).